Reading from the N-terminus, the 3078-residue chain is Probable polyketide synthase 44 (3078 aa).

Positions 10-435 (DNDVAIIGIG…GSNACLILTE (426 aa)) constitute a Ketosynthase family 3 (KS3) domain. Catalysis depends on for beta-ketoacyl synthase activity residues cysteine 175, histidine 320, and histidine 358. The acyl/malonyl transferase stretch occupies residues 627-660 (GILASISIGHSLGEVSSAVCSGMIDLETGCFIIY). Serine 637 serves as the catalytic For acyl/malonyl transferase activity. An N-terminal hotdog fold region spans residues 952–1072 (TNHLGYRNER…GRLSTTKHND (121 aa)). Positions 952 to 1239 (TNHLGYRNER…YTQLTPYKNQ (288 aa)) constitute a PKS/mFAS DH domain. Histidine 984 functions as the Proton acceptor; for dehydratase activity in the catalytic mechanism. Residues 1088-1239 (NFVTIQKKEL…YTQLTPYKNQ (152 aa)) form a C-terminal hotdog fold region. Aspartate 1150 functions as the Proton donor; for dehydratase activity in the catalytic mechanism. A coiled-coil region spans residues 2080-2119 (LENIKTDLSNKNDNNNNNNNNNNDNKESNIKELLDNDDDE). Residues 2087–2108 (LSNKNDNNNNNNNNNNDNKESN) are disordered. The span at 2090–2102 (KNDNNNNNNNNNN) shows a compositional bias: low complexity. Residues 2558 to 2636 (SDDLSIREQI…QLIQSVTDAM (79 aa)) enclose the Carrier domain. The residue at position 2596 (serine 2596) is an O-(pantetheine 4'-phosphoryl)serine. A helical transmembrane segment spans residues 2694 to 2714 (NTVFLTGSSGFIGIYILFYLI).

The cofactor is pantetheine 4'-phosphate.

Its subcellular location is the membrane. Its function is as follows. Probable polyketide synthase. The chain is Probable polyketide synthase 44 (pks44) from Dictyostelium discoideum (Social amoeba).